We begin with the raw amino-acid sequence, 469 residues long: UDP-N-acetylmuramoylalanine--D-glutamate ligase (469 aa).

125–131 (GTNGKTT) serves as a coordination point for ATP.

The protein belongs to the MurCDEF family.

Its subcellular location is the cytoplasm. The enzyme catalyses UDP-N-acetyl-alpha-D-muramoyl-L-alanine + D-glutamate + ATP = UDP-N-acetyl-alpha-D-muramoyl-L-alanyl-D-glutamate + ADP + phosphate + H(+). It participates in cell wall biogenesis; peptidoglycan biosynthesis. Functionally, cell wall formation. Catalyzes the addition of glutamate to the nucleotide precursor UDP-N-acetylmuramoyl-L-alanine (UMA). The protein is UDP-N-acetylmuramoylalanine--D-glutamate ligase of Prochlorococcus marinus (strain NATL2A).